The primary structure comprises 383 residues: Chorismate synthase (383 aa).

NADP(+) is bound by residues arginine 39 and arginine 45. FMN-binding positions include arginine 128–serine 130, glycine 291, lysine 306–threonine 310, and arginine 332.

This sequence belongs to the chorismate synthase family. As to quaternary structure, homotetramer. The cofactor is FMNH2.

It catalyses the reaction 5-O-(1-carboxyvinyl)-3-phosphoshikimate = chorismate + phosphate. Its pathway is metabolic intermediate biosynthesis; chorismate biosynthesis; chorismate from D-erythrose 4-phosphate and phosphoenolpyruvate: step 7/7. In terms of biological role, catalyzes the anti-1,4-elimination of the C-3 phosphate and the C-6 proR hydrogen from 5-enolpyruvylshikimate-3-phosphate (EPSP) to yield chorismate, which is the branch point compound that serves as the starting substrate for the three terminal pathways of aromatic amino acid biosynthesis. This reaction introduces a second double bond into the aromatic ring system. This is Chorismate synthase from Thermus thermophilus (strain ATCC 27634 / DSM 579 / HB8).